The following is a 59-amino-acid chain: MLNIFSLICLSSALHSSSFFFAKLPEAYALFNPIVDVMPVIPVLFFLLALVWQAAVSFR.

Residues 1–22 constitute a propeptide that is removed on maturation; the sequence is MLNIFSLICLSSALHSSSFFFA. A helical membrane pass occupies residues 38–58; the sequence is MPVIPVLFFLLALVWQAAVSF.

This sequence belongs to the PsbK family. As to quaternary structure, PSII is composed of 1 copy each of membrane proteins PsbA, PsbB, PsbC, PsbD, PsbE, PsbF, PsbH, PsbI, PsbJ, PsbK, PsbL, PsbM, PsbT, PsbX, PsbY, PsbZ, Psb30/Ycf12, at least 3 peripheral proteins of the oxygen-evolving complex and a large number of cofactors. It forms dimeric complexes.

It localises to the plastid. Its subcellular location is the chloroplast thylakoid membrane. Its function is as follows. One of the components of the core complex of photosystem II (PSII). PSII is a light-driven water:plastoquinone oxidoreductase that uses light energy to abstract electrons from H(2)O, generating O(2) and a proton gradient subsequently used for ATP formation. It consists of a core antenna complex that captures photons, and an electron transfer chain that converts photonic excitation into a charge separation. This chain is Photosystem II reaction center protein K, found in Piper cenocladum (Ant piper).